The primary structure comprises 363 residues: MAP kinase kinase skh1/pek1 (363 aa).

The 265-residue stretch at 79–343 folds into the Protein kinase domain; sequence ILYMNSLGEG…PQKMLTHPWV (265 aa). ATP is bound by residues 85–93 and Lys108; that span reads LGEGVSGSV. The Proton acceptor role is filled by Asp206. Residue Ser234 is modified to Phosphoserine. Thr238 carries the post-translational modification Phosphothreonine.

Belongs to the protein kinase superfamily. STE Ser/Thr protein kinase family. MAP kinase kinase subfamily.

It catalyses the reaction L-seryl-[protein] + ATP = O-phospho-L-seryl-[protein] + ADP + H(+). It carries out the reaction L-threonyl-[protein] + ATP = O-phospho-L-threonyl-[protein] + ADP + H(+). The catalysed reaction is L-tyrosyl-[protein] + ATP = O-phospho-L-tyrosyl-[protein] + ADP + H(+). Activated by mkh1. Its function is as follows. Involved in the mkh1 signal transduction pathway that plays a role in cell wall integrity. Activates spm1/pmk1 via phosphorylation. In Schizosaccharomyces pombe (strain 972 / ATCC 24843) (Fission yeast), this protein is MAP kinase kinase skh1/pek1 (skh1).